Here is a 498-residue protein sequence, read N- to C-terminus: U4/U6 small nuclear ribonucleoprotein Prp31 (498 aa).

Coiled-coil stretches lie at residues 84-119 and 180-214; these read EAAP…KYSK and DEEL…MSFI. The 119-residue stretch at 214-332 folds into the Nop domain; the sequence is IAPNLSIIVG…IERKFDKWQE (119 aa). A disordered region spans residues 333–356; the sequence is PPPVKQVKPLPAPLDGQRKKRGGR. Residues 350-363 carry the Nuclear localization signal (NLS) motif; it reads RKKRGGRRYRKMKE.

Belongs to the PRP31 family. In terms of assembly, identified in the spliceosome B complex. Component of the U4/U6-U5 tri-snRNP complex. Component of some MLL1/MLL complex.

The protein resides in the nucleus. It localises to the nucleus speckle. The protein localises to the cajal body. Functionally, involved in pre-mRNA splicing as component of the spliceosome. Required for the assembly of the U4/U5/U6 tri-snRNP complex, one of the building blocks of the spliceosome. This chain is U4/U6 small nuclear ribonucleoprotein Prp31 (prpf31), found in Xenopus tropicalis (Western clawed frog).